The chain runs to 170 residues: Shikimate kinase (170 aa).

11–16 (LSGKST) serves as a coordination point for ATP. Residue Ser15 coordinates Mg(2+). Positions 33, 57, and 79 each coordinate substrate. Residue Arg119 coordinates ATP. Residue Arg137 participates in substrate binding.

Belongs to the shikimate kinase family. In terms of assembly, monomer. It depends on Mg(2+) as a cofactor.

Its subcellular location is the cytoplasm. The enzyme catalyses shikimate + ATP = 3-phosphoshikimate + ADP + H(+). Its pathway is metabolic intermediate biosynthesis; chorismate biosynthesis; chorismate from D-erythrose 4-phosphate and phosphoenolpyruvate: step 5/7. In terms of biological role, catalyzes the specific phosphorylation of the 3-hydroxyl group of shikimic acid using ATP as a cosubstrate. In Clostridium botulinum (strain Loch Maree / Type A3), this protein is Shikimate kinase.